The primary structure comprises 306 residues: Bifunctional protein FolD 1 (306 aa).

Residues 168 to 170, S193, and I234 each bind NADP(+); that span reads GRS.

It belongs to the tetrahydrofolate dehydrogenase/cyclohydrolase family. Homodimer.

It carries out the reaction (6R)-5,10-methylene-5,6,7,8-tetrahydrofolate + NADP(+) = (6R)-5,10-methenyltetrahydrofolate + NADPH. It catalyses the reaction (6R)-5,10-methenyltetrahydrofolate + H2O = (6R)-10-formyltetrahydrofolate + H(+). It participates in one-carbon metabolism; tetrahydrofolate interconversion. Its function is as follows. Catalyzes the oxidation of 5,10-methylenetetrahydrofolate to 5,10-methenyltetrahydrofolate and then the hydrolysis of 5,10-methenyltetrahydrofolate to 10-formyltetrahydrofolate. The protein is Bifunctional protein FolD 1 of Rhizobium meliloti (strain 1021) (Ensifer meliloti).